The sequence spans 221 residues: Ribonuclease P protein subunit p29 (221 aa).

Ser-10 carries the phosphoserine modification.

The protein belongs to the eukaryotic/archaeal RNase P protein component 1 family. As to quaternary structure, component of nuclear RNase P and RNase MRP ribonucleoproteins. RNase P consists of a catalytic RNA moiety and 10 different protein chains; POP1, POP4, POP5, POP7, RPP14, RPP21, RPP25, RPP30, RPP38 and RPP40. Within the RNase P complex, POP1, POP7 and RPP25 form the 'finger' subcomplex, POP5, RPP14, RPP40 and homodimeric RPP30 form the 'palm' subcomplex, and RPP21, POP4 and RPP38 form the 'wrist' subcomplex. All subunits of the RNase P complex interact with the catalytic RNA. Several subunits of RNase P are also part of the RNase MRP complex. RNase MRP consists of a catalytic RNA moiety and about 8 protein subunits; POP1, POP7, RPP25, RPP30, RPP38, RPP40 and possibly also POP4 and POP5.

Its subcellular location is the nucleus. The protein resides in the nucleolus. In terms of biological role, component of ribonuclease P, a ribonucleoprotein complex that generates mature tRNA molecules by cleaving their 5'-ends. This chain is Ribonuclease P protein subunit p29 (Pop4), found in Mus musculus (Mouse).